A 205-amino-acid chain; its full sequence is Holliday junction branch migration complex subunit RuvA (205 aa).

Residues methionine 1–alanine 63 form a domain I region. The tract at residues threonine 64–valine 142 is domain II. The tract at residues alanine 143–alanine 153 is flexible linker. The tract at residues alanine 153–glycine 205 is domain III.

Belongs to the RuvA family. As to quaternary structure, homotetramer. Forms an RuvA(8)-RuvB(12)-Holliday junction (HJ) complex. HJ DNA is sandwiched between 2 RuvA tetramers; dsDNA enters through RuvA and exits via RuvB. An RuvB hexamer assembles on each DNA strand where it exits the tetramer. Each RuvB hexamer is contacted by two RuvA subunits (via domain III) on 2 adjacent RuvB subunits; this complex drives branch migration. In the full resolvosome a probable DNA-RuvA(4)-RuvB(12)-RuvC(2) complex forms which resolves the HJ.

The protein localises to the cytoplasm. Functionally, the RuvA-RuvB-RuvC complex processes Holliday junction (HJ) DNA during genetic recombination and DNA repair, while the RuvA-RuvB complex plays an important role in the rescue of blocked DNA replication forks via replication fork reversal (RFR). RuvA specifically binds to HJ cruciform DNA, conferring on it an open structure. The RuvB hexamer acts as an ATP-dependent pump, pulling dsDNA into and through the RuvAB complex. HJ branch migration allows RuvC to scan DNA until it finds its consensus sequence, where it cleaves and resolves the cruciform DNA. This Brevibacillus brevis (strain 47 / JCM 6285 / NBRC 100599) protein is Holliday junction branch migration complex subunit RuvA.